Reading from the N-terminus, the 25-residue chain is Caerin-1.19 (25 aa).

Leucine amide is present on L25.

It belongs to the frog skin active peptide (FSAP) family. Caerin subfamily. In terms of tissue distribution, expressed by the skin dorsal glands.

It is found in the secreted. Its function is as follows. Caerin-1.19 shows significant activity against Gram-positive organisms, but is less effective against Gram-negative organisms. In Ranoidea gracilenta (Dainty green tree frog), this protein is Caerin-1.19.